A 1039-amino-acid chain; its full sequence is 3',5'-cyclic-AMP phosphodiesterase 4 (1039 aa).

The first 29 residues, 1–29 (MFNNNNNDKINNTMMSNNPSGQIINLESI), serve as a signal peptide directing secretion. N-linked (GlcNAc...) asparagine glycans are attached at residues N11, N34, and N37. Residues 30–201 (DCNSNLSNTT…KKKVNAESLR (172 aa)) lie on the Extracellular side of the membrane. 2 disordered regions span residues 40–63 (SIKD…NNIN) and 116–181 (IIPN…NNSI). Positions 45–63 (NNNNNNNNNNNNNINNNIN) are enriched in low complexity. Residues N119, N124, N131, N167, and N178 are each glycosylated (N-linked (GlcNAc...) asparagine). A helical membrane pass occupies residues 202-222 (GPIIFQNFILYTFFLIVIGTA). Residues 223–226 (EGTS) are Cytoplasmic-facing. A helical membrane pass occupies residues 227–247 (WAPEIRVANFVPYCVMCVVLL). At 248-256 (EFNRLHKKP) the chain is on the extracellular side. A helical membrane pass occupies residues 257–277 (LLRIIFPLYTSNIPFAYMCIF). Residues 278–283 (SREARK) lie on the Cytoplasmic side of the membrane. The chain crosses the membrane as a helical span at residues 284–304 (YVLISLLFFASCLCIFLQSGI). Residues 305–310 (PDLRKH) lie on the Extracellular side of the membrane. The chain crosses the membrane as a helical span at residues 311–331 (IVIFCIIFMINYGCCILFMDW). Topologically, residues 332–356 (FYIDTTGTKPYRGRILATKIHWGEE) are cytoplasmic. A helical transmembrane segment spans residues 357–377 (ATILVSMALLGCIFIVLEKFI). Over 378–1039 (KSYARCVAEQ…LTQSNYLIVV (662 aa)) the chain is Extracellular. Residues 384–414 (VAEQHYQIQCLQKEKEKLQTEINISLKKLDL) adopt a coiled-coil conformation. Residues N406, N430, N500, and N515 are each glycosylated (N-linked (GlcNAc...) asparagine). The region spanning 533-973 (PEITDQGIQE…QQLQQQQQQQ (441 aa)) is the PDEase domain. The active-site Proton donor is H609. 3 residues coordinate a divalent metal cation: H613, H648, and D649. Residues 738 to 835 (FPTTTNTQQP…NNSNSNNQNQ (98 aa)) are disordered. The segment covering 740–835 (TTTNTQQPSS…NNSNSNNQNQ (96 aa)) has biased composition (low complexity). 7 N-linked (GlcNAc...) asparagine glycosylation sites follow: N769, N791, N795, N804, N809, N823, and N826. D861 lines the a divalent metal cation pocket. 4 N-linked (GlcNAc...) asparagine glycosylation sites follow: N874, N944, N1018, and N1023. The segment covering 978 to 1019 (QQQQQQLHHHQQQQQFQHQQHQQQLQHQHQQQLNNQNQNQNQ) has biased composition (low complexity). The interval 978 to 1033 (QQQQQQLHHHQQQQQFQHQQHQQQLQHQHQQQLNNQNQNQNQSNSNNSNSFGLTQS) is disordered. Residues 1020-1033 (SNSNNSNSFGLTQS) show a composition bias toward polar residues.

It belongs to the cyclic nucleotide phosphodiesterase family. Requires a divalent metal cation as cofactor.

Its subcellular location is the cell membrane. The enzyme catalyses 3',5'-cyclic AMP + H2O = AMP + H(+). Its activity is regulated as follows. Inhibited by 3-isobutyl-1-methylxanthine (IBMX). In terms of biological role, phosphodiesterase specific for extracellular cAMP. Involved in the degradation of extracellular cAMP specifically during multicellular development. This Dictyostelium discoideum (Social amoeba) protein is 3',5'-cyclic-AMP phosphodiesterase 4 (Pde4).